The chain runs to 332 residues: MSVVRIGPYTLPNRLILAPMAGVTDRPFRQLCRRLGAGMVVSEMVTSDVRLWNSRKSRLRLIHDGEDEPRSVQIAGGDPAMLAEAAQRNVELGAQIIDINMGCPAKKVCNKAAGSALLRDEALVAEILDAVVRAVDVPVTLKIRTGWDRDNRNGVTVAKLAEQAGIQALAVHGRTRADLYTGEAEYETIAAIKQAVSIPVFANGDIDSPEKARKVIEQTGVDALLIGRAAQGRPWIFREIDHYLRTGEHLPAAPLPEVQSILLEHLAELHLFYGEEMGVRIARKHVGWYLATLPGAREFRAQFNRLQDTDAQCASVRQFFAERQNNGTGVAA.

FMN contacts are provided by residues 19 to 21 (PMA) and Gln-73. The active-site Proton donor is the Cys-103. FMN is bound by residues Lys-142, 203–205 (NGD), and 227–228 (GR).

The protein belongs to the Dus family. DusB subfamily. It depends on FMN as a cofactor.

The enzyme catalyses a 5,6-dihydrouridine in tRNA + NAD(+) = a uridine in tRNA + NADH + H(+). It catalyses the reaction a 5,6-dihydrouridine in tRNA + NADP(+) = a uridine in tRNA + NADPH + H(+). Functionally, catalyzes the synthesis of 5,6-dihydrouridine (D), a modified base found in the D-loop of most tRNAs, via the reduction of the C5-C6 double bond in target uridines. This is tRNA-dihydrouridine synthase B from Pseudomonas aeruginosa (strain ATCC 15692 / DSM 22644 / CIP 104116 / JCM 14847 / LMG 12228 / 1C / PRS 101 / PAO1).